A 278-amino-acid chain; its full sequence is Trehalose/maltose transport system permease protein MalG (278 aa).

6 helical membrane-spanning segments follow: residues 12 to 32 (IIGAILMAIICLFPFIWMIVV), 74 to 94 (IIIASLVTLTTVSISSLAAYA), 106 to 126 (IPIFVLGLSMFPQISLVGYLF), 141 to 161 (LYFPYVAWTLPLSLWILLSYF), 186 to 206 (IILPLSAPALFSTALLVFIAA), and 242 to 262 (GSVMAASVISTIPLVIMALLF). The ABC transmembrane type-1 domain occupies 70–262 (LKNSIIIASL…IPLVIMALLF (193 aa)).

The protein belongs to the binding-protein-dependent transport system permease family. The complex is composed of two ATP-binding proteins (MalK), two transmembrane proteins (MalG and MalF) and a solute-binding protein (MalE).

It localises to the cell membrane. Functionally, part of the ABC transporter complex MalEFGK involved in trehalose/maltose import. Responsible for the translocation of the substrate across the membrane. The polypeptide is Trehalose/maltose transport system permease protein MalG (malG) (Thermococcus litoralis (strain ATCC 51850 / DSM 5473 / JCM 8560 / NS-C)).